We begin with the raw amino-acid sequence, 886 residues long: DNA mismatch repair protein MutS (886 aa).

An ATP-binding site is contributed by 641–648 (GPNMAGKS).

The protein belongs to the DNA mismatch repair MutS family.

Functionally, this protein is involved in the repair of mismatches in DNA. It is possible that it carries out the mismatch recognition step. This protein has a weak ATPase activity. The polypeptide is DNA mismatch repair protein MutS (Rickettsia rickettsii (strain Sheila Smith)).